An 81-amino-acid polypeptide reads, in one-letter code: Sulfur carrier protein TusA (81 aa).

The Cysteine persulfide intermediate role is filled by Cys-19.

This sequence belongs to the sulfur carrier protein TusA family.

It is found in the cytoplasm. Functionally, sulfur carrier protein which probably makes part of a sulfur-relay system. This is Sulfur carrier protein TusA from Shewanella baltica (strain OS185).